The following is a 311-amino-acid chain: Malate dehydrogenase (311 aa).

NAD(+) is bound by residues 7–13 (GAAGGIG) and aspartate 34. 2 residues coordinate substrate: arginine 81 and arginine 87. NAD(+) is bound by residues asparagine 94 and 117–119 (ITN). The substrate site is built by asparagine 119 and arginine 153. Histidine 177 serves as the catalytic Proton acceptor. Methionine 227 lines the NAD(+) pocket.

It belongs to the LDH/MDH superfamily. MDH type 1 family. As to quaternary structure, homodimer.

The enzyme catalyses (S)-malate + NAD(+) = oxaloacetate + NADH + H(+). Catalyzes the reversible oxidation of malate to oxaloacetate. This Shewanella sediminis (strain HAW-EB3) protein is Malate dehydrogenase.